Here is a 61-residue protein sequence, read N- to C-terminus: Small ribosomal subunit protein uS14 (61 aa).

Residues cysteine 24, cysteine 27, cysteine 40, and cysteine 43 each coordinate Zn(2+).

Belongs to the universal ribosomal protein uS14 family. Zinc-binding uS14 subfamily. As to quaternary structure, part of the 30S ribosomal subunit. Contacts proteins S3 and S10. It depends on Zn(2+) as a cofactor.

Its function is as follows. Binds 16S rRNA, required for the assembly of 30S particles and may also be responsible for determining the conformation of the 16S rRNA at the A site. The chain is Small ribosomal subunit protein uS14 from Geobacillus thermodenitrificans (strain NG80-2).